The primary structure comprises 277 residues: Shikimate dehydrogenase (NADP(+)) (277 aa).

Shikimate contacts are provided by residues 20 to 22 (SLS) and threonine 67. The active-site Proton acceptor is the lysine 71. An NADP(+)-binding site is contributed by aspartate 83. Asparagine 92 and aspartate 107 together coordinate shikimate. NADP(+) is bound by residues 131-135 (GAGGV) and isoleucine 219. Tyrosine 221 provides a ligand contact to shikimate. Residue glycine 242 coordinates NADP(+).

The protein belongs to the shikimate dehydrogenase family. In terms of assembly, homodimer.

The catalysed reaction is shikimate + NADP(+) = 3-dehydroshikimate + NADPH + H(+). Its pathway is metabolic intermediate biosynthesis; chorismate biosynthesis; chorismate from D-erythrose 4-phosphate and phosphoenolpyruvate: step 4/7. Involved in the biosynthesis of the chorismate, which leads to the biosynthesis of aromatic amino acids. Catalyzes the reversible NADPH linked reduction of 3-dehydroshikimate (DHSA) to yield shikimate (SA). This is Shikimate dehydrogenase (NADP(+)) from Pelobacter propionicus (strain DSM 2379 / NBRC 103807 / OttBd1).